Here is a 242-residue protein sequence, read N- to C-terminus: Type III pantothenate kinase (242 aa).

7–14 (DLGNSRFK) serves as a coordination point for ATP. Substrate-binding positions include Tyr91 and 98 to 101 (GVDR). Catalysis depends on Asp100, which acts as the Proton acceptor. An ATP-binding site is contributed by Thr121. Substrate is bound at residue Thr171.

Belongs to the type III pantothenate kinase family. Homodimer. Requires NH4(+) as cofactor. It depends on K(+) as a cofactor.

The protein resides in the cytoplasm. It catalyses the reaction (R)-pantothenate + ATP = (R)-4'-phosphopantothenate + ADP + H(+). It functions in the pathway cofactor biosynthesis; coenzyme A biosynthesis; CoA from (R)-pantothenate: step 1/5. Functionally, catalyzes the phosphorylation of pantothenate (Pan), the first step in CoA biosynthesis. This chain is Type III pantothenate kinase, found in Xylella fastidiosa (strain M23).